Reading from the N-terminus, the 317-residue chain is Acetyl-coenzyme A carboxylase carboxyl transferase subunit alpha (317 aa).

Residues 39 to 293 form the CoA carboxyltransferase C-terminal domain; sequence RLESKAAAAL…GDALAEALTG (255 aa).

Belongs to the AccA family. Acetyl-CoA carboxylase is a heterohexamer composed of biotin carboxyl carrier protein (AccB), biotin carboxylase (AccC) and two subunits each of ACCase subunit alpha (AccA) and ACCase subunit beta (AccD).

It localises to the cytoplasm. It carries out the reaction N(6)-carboxybiotinyl-L-lysyl-[protein] + acetyl-CoA = N(6)-biotinyl-L-lysyl-[protein] + malonyl-CoA. It functions in the pathway lipid metabolism; malonyl-CoA biosynthesis; malonyl-CoA from acetyl-CoA: step 1/1. Component of the acetyl coenzyme A carboxylase (ACC) complex. First, biotin carboxylase catalyzes the carboxylation of biotin on its carrier protein (BCCP) and then the CO(2) group is transferred by the carboxyltransferase to acetyl-CoA to form malonyl-CoA. In Methylobacterium nodulans (strain LMG 21967 / CNCM I-2342 / ORS 2060), this protein is Acetyl-coenzyme A carboxylase carboxyl transferase subunit alpha.